The chain runs to 231 residues: Large ribosomal subunit protein uL1 (231 aa).

It belongs to the universal ribosomal protein uL1 family. In terms of assembly, part of the 50S ribosomal subunit.

Its function is as follows. Binds directly to 23S rRNA. The L1 stalk is quite mobile in the ribosome, and is involved in E site tRNA release. In terms of biological role, protein L1 is also a translational repressor protein, it controls the translation of the L11 operon by binding to its mRNA. The chain is Large ribosomal subunit protein uL1 from Saccharophagus degradans (strain 2-40 / ATCC 43961 / DSM 17024).